Reading from the N-terminus, the 493-residue chain is UDP-N-acetylmuramoyl-L-alanyl-D-glutamate--2,6-diaminopimelate ligase (493 aa).

Positions 30 and 32 each coordinate UDP-N-acetyl-alpha-D-muramoyl-L-alanyl-D-glutamate. 117–123 (GTNGKTT) is a binding site for ATP. UDP-N-acetyl-alpha-D-muramoyl-L-alanyl-D-glutamate contacts are provided by residues Asn158, 159-160 (TT), Ser186, Gln192, and Arg194. At Lys226 the chain carries N6-carboxylysine. Residues Arg388, 412-415 (DNPR), Gly463, and Glu467 contribute to the meso-2,6-diaminopimelate site. The short motif at 412-415 (DNPR) is the Meso-diaminopimelate recognition motif element.

Belongs to the MurCDEF family. MurE subfamily. It depends on Mg(2+) as a cofactor. Carboxylation is probably crucial for Mg(2+) binding and, consequently, for the gamma-phosphate positioning of ATP.

Its subcellular location is the cytoplasm. The enzyme catalyses UDP-N-acetyl-alpha-D-muramoyl-L-alanyl-D-glutamate + meso-2,6-diaminopimelate + ATP = UDP-N-acetyl-alpha-D-muramoyl-L-alanyl-gamma-D-glutamyl-meso-2,6-diaminopimelate + ADP + phosphate + H(+). It functions in the pathway cell wall biogenesis; peptidoglycan biosynthesis. Catalyzes the addition of meso-diaminopimelic acid to the nucleotide precursor UDP-N-acetylmuramoyl-L-alanyl-D-glutamate (UMAG) in the biosynthesis of bacterial cell-wall peptidoglycan. The sequence is that of UDP-N-acetylmuramoyl-L-alanyl-D-glutamate--2,6-diaminopimelate ligase from Vibrio parahaemolyticus serotype O3:K6 (strain RIMD 2210633).